The primary structure comprises 96 residues: Toxin ParE1 (96 aa).

It belongs to the RelE toxin family. In terms of assembly, forms a ParD1(2)-ParE1(2) heterotetramer.

Its function is as follows. Toxic component of a type II toxin-antitoxin (TA) system. Its toxic effect is neutralized by coexpression with cognate antitoxin ParD1 but no other ParD or RelB antitoxin. Low levels of wild-type toxin in the absence of antitoxin decreases the rate of cell growth, and results in death or loss of colony formation abilities and greatly elongated cells. Low levels of a mutant missing the last 4 residues leads to loss of cell division while cell elongation continues. The protein is Toxin ParE1 (parE1) of Caulobacter vibrioides (strain ATCC 19089 / CIP 103742 / CB 15) (Caulobacter crescentus).